The primary structure comprises 402 residues: CinA-like protein (402 aa).

It belongs to the CinA family.

This Deinococcus deserti (strain DSM 17065 / CIP 109153 / LMG 22923 / VCD115) protein is CinA-like protein.